Reading from the N-terminus, the 356-residue chain is S-adenosylmethionine:tRNA ribosyltransferase-isomerase (356 aa).

Belongs to the QueA family. Monomer.

The protein localises to the cytoplasm. It carries out the reaction 7-aminomethyl-7-carbaguanosine(34) in tRNA + S-adenosyl-L-methionine = epoxyqueuosine(34) in tRNA + adenine + L-methionine + 2 H(+). It participates in tRNA modification; tRNA-queuosine biosynthesis. Its function is as follows. Transfers and isomerizes the ribose moiety from AdoMet to the 7-aminomethyl group of 7-deazaguanine (preQ1-tRNA) to give epoxyqueuosine (oQ-tRNA). The polypeptide is S-adenosylmethionine:tRNA ribosyltransferase-isomerase (Escherichia coli (strain ATCC 8739 / DSM 1576 / NBRC 3972 / NCIMB 8545 / WDCM 00012 / Crooks)).